A 247-amino-acid polypeptide reads, in one-letter code: 5-oxoprolinase subunit A 1 (247 aa).

This sequence belongs to the LamB/PxpA family. As to quaternary structure, forms a complex composed of PxpA, PxpB and PxpC.

It catalyses the reaction 5-oxo-L-proline + ATP + 2 H2O = L-glutamate + ADP + phosphate + H(+). Functionally, catalyzes the cleavage of 5-oxoproline to form L-glutamate coupled to the hydrolysis of ATP to ADP and inorganic phosphate. This chain is 5-oxoprolinase subunit A 1, found in Ralstonia nicotianae (strain ATCC BAA-1114 / GMI1000) (Ralstonia solanacearum).